A 1662-amino-acid polypeptide reads, in one-letter code: Cortactin-binding protein 2 (1662 aa).

Disordered regions lie at residues 1–23 (MATD…AGAA), 202–235 (KKKT…EFDT), 365–439 (IGVS…LHPG), and 453–477 (GNAN…SPTS). A coiled-coil region spans residues 118-275 (RKMQERMSAQ…EQLKRGSDSK (158 aa)). Residues 385–395 (PSTGSTPDPTS) are compositionally biased toward low complexity. Over residues 404–421 (AAPSTAQTPGITPQNSQA) the composition is skewed to polar residues. Arginine 497 bears the Asymmetric dimethylarginine mark. Residues 498-615 (FTGPQAGAPP…SSPQLPPKPS (118 aa)) form a disordered region. 2 stretches are compositionally biased toward polar residues: residues 516–529 (DVST…TSVK) and 582–592 (TVASPPSSLPQ). ANK repeat units lie at residues 708–738 (GRPT…DINY), 742–771 (DGHS…QVNA), 775–804 (NGFT…NINH), 808–837 (GGQT…DRSV), and 841–870 (DGWT…PAHG). A disordered region spans residues 871–897 (NSFSEEESESGVFDLDEGEESPEGKSK). A compositionally biased stretch (acidic residues) spans 874-891 (SEEESESGVFDLDEGEES). An ANK 6 repeat occupies 911 to 941 (EGWTAAHIAASKGFKNCLEILCRHGGLETER). The tract at residues 1446 to 1473 (KKKGESGAWRKVNTSPRRKSGRFSLPTW) is disordered. Serine 1523 bears the Phosphoserine mark. The interval 1614–1662 (VPRSKVTQCSQNTKRSSSSSNTRQIEINNNSKEENWNLHKNEHLEKPNK) is disordered. Low complexity predominate over residues 1623 to 1637 (SQNTKRSSSSSNTRQ). Residues 1644–1662 (SKEENWNLHKNEHLEKPNK) show a composition bias toward basic and acidic residues.

As to quaternary structure, interacts with CTTN/cortactin SH3 domain. Interacts with STRN, STRN4/zinedin and MOB4/phocein; this interactions mediate the association with the STRIPAK core complex and may regulate dendritic spine distribution of the STRIPAK complex in hippocampal neurons. Activation of glutamate receptors weakens the interaction with STRN and STRN4.

The protein localises to the cytoplasm. The protein resides in the cell cortex. Its subcellular location is the cell projection. It localises to the dendritic spine. In terms of biological role, regulates the dendritic spine distribution of CTTN/cortactin in hippocampal neurons, and thus controls dendritic spinogenesis and dendritic spine maintenance. Associates with the striatin-interacting phosphatase and kinase (STRIPAK) core complex to regulate dendritic spine distribution of the STRIPAK complex in hippocampal neurons. The sequence is that of Cortactin-binding protein 2 (CTTNBP2) from Callithrix jacchus (White-tufted-ear marmoset).